Consider the following 100-residue polypeptide: Transcription and mRNA export factor SUS1 (100 aa).

The protein belongs to the ENY2 family. Component of the nuclear pore complex (NPC)-associated TREX-2 complex (transcription and export complex 2), composed of at least SUS1, SAC3, THP1, SEM1, and CDC31. TREX-2 contains 2 SUS1 chains. The TREX-2 complex interacts with the nucleoporin NUP1. Component of the 1.8 MDa SAGA transcription coactivator-HAT complex. SAGA is built of 5 distinct domains with specialized functions. Within the SAGA complex, SUS1, SGF11, SGF73 and UBP8 form an additional subcomplex of SAGA called the DUB module (deubiquitination module). Interacts directly with THP1, SAC3, SGF11, and with the RNA polymerase II.

It is found in the nucleus. It localises to the nucleoplasm. The protein localises to the cytoplasm. Its subcellular location is the P-body. Functionally, involved in mRNA export coupled transcription activation by association with both the TREX-2 and the SAGA complexes. At the promoters, SAGA is required for recruitment of the basal transcription machinery. It influences RNA polymerase II transcriptional activity through different activities such as TBP interaction and promoter selectivity, interaction with transcription activators, and chromatin modification through histone acetylation and deubiquitination. Within the SAGA complex, participates in a subcomplex required for deubiquitination of H2B and for the maintenance of steady-state H3 methylation levels. The TREX-2 complex functions in docking export-competent ribonucleoprotein particles (mRNPs) to the nuclear entrance of the nuclear pore complex (nuclear basket). TREX-2 participates in mRNA export and accurate chromatin positioning in the nucleus by tethering genes to the nuclear periphery. May also be involved in cytoplasmic mRNA decay by interaction with components of P-bodies. The protein is Transcription and mRNA export factor SUS1 of Cryptococcus neoformans var. neoformans serotype D (strain B-3501A) (Filobasidiella neoformans).